The sequence spans 279 residues: Large ribosomal subunit protein uL2 (279 aa).

Positions 222-264 are disordered; it reads GVAMNPVDHPHGGGEGRTSGGRNPVTPAGKPTKGAKTRVNKAT.

The protein belongs to the universal ribosomal protein uL2 family. As to quaternary structure, part of the 50S ribosomal subunit. Forms a bridge to the 30S subunit in the 70S ribosome.

One of the primary rRNA binding proteins. Required for association of the 30S and 50S subunits to form the 70S ribosome, for tRNA binding and peptide bond formation. It has been suggested to have peptidyltransferase activity; this is somewhat controversial. Makes several contacts with the 16S rRNA in the 70S ribosome. This is Large ribosomal subunit protein uL2 from Caulobacter sp. (strain K31).